We begin with the raw amino-acid sequence, 291 residues long: 3-hydroxy-5-phosphonooxypentane-2,4-dione thiolase (291 aa).

The Schiff-base intermediate with substrate role is filled by K203.

It belongs to the DeoC/FbaB aldolase family. As to quaternary structure, homodecamer.

Its subcellular location is the cytoplasm. It carries out the reaction dihydroxyacetone phosphate + acetyl-CoA = 3-hydroxy-2,4-dioxopentyl phosphate + CoA. Its function is as follows. Involved in the degradation of phospho-AI-2, thereby terminating induction of the lsr operon and closing the AI-2 signaling cycle. Catalyzes the transfer of an acetyl moiety from 3-hydroxy-5-phosphonooxypentane-2,4-dione to CoA to form glycerone phosphate and acetyl-CoA. This Salmonella typhimurium (strain LT2 / SGSC1412 / ATCC 700720) protein is 3-hydroxy-5-phosphonooxypentane-2,4-dione thiolase.